The sequence spans 321 residues: Coproporphyrin III ferrochelatase (321 aa).

His185 and Glu267 together coordinate Fe(2+).

It belongs to the ferrochelatase family.

Its subcellular location is the cytoplasm. It carries out the reaction Fe-coproporphyrin III + 2 H(+) = coproporphyrin III + Fe(2+). Its pathway is porphyrin-containing compound metabolism; protoheme biosynthesis. Its function is as follows. Involved in coproporphyrin-dependent heme b biosynthesis. Catalyzes the insertion of ferrous iron into coproporphyrin III to form Fe-coproporphyrin III. The protein is Coproporphyrin III ferrochelatase of Lacticaseibacillus paracasei (strain ATCC 334 / BCRC 17002 / CCUG 31169 / CIP 107868 / KCTC 3260 / NRRL B-441) (Lactobacillus paracasei).